Here is a 411-residue protein sequence, read N- to C-terminus: MREHFNDGIEFARFLAHRFVTDKAPNSAAALTYTTLFAVVPMMTVMFSMLSLIPAFHGMGESIQTFIFRNFVPSAGEAVETYLKSFTTQARHLTWVGVVFLAVTAFTMLVTIEKAFNEIWRVRQPRRGVGRFLLYWAILSLGPLLLGAGFAVTTYITSLSLLHGPDALPGAETLLGLMPLAFSVAAFTLLYSAVPNARVPVRHALMGGMFTAVLFEAAKTLFGLYVSLFPGYQLIYGAFATVPIFLLWIYLSWMIVLFGAVLVCNLSSSRLWRRRSLPKPIVLLGVLRVFHQRQQLGQSMRLVHLHRAGWLLPEDEWEELLDFLEKEQFVCRVGGGEWVLCRDLGSYSLHRLLNRCPWPMPSRERMPAQLDEAWYPAFQQAMERLQAEQERLFGESLAHWLAEGNASAKVT.

The next 6 membrane-spanning stretches (helical) occupy residues 36-56, 92-112, 132-152, 174-194, 207-229, and 244-264; these read LFAV…IPAF, HLTW…LVTI, FLLY…GFAV, LLGL…YSAV, GGMF…VSLF, and IFLL…VLVC.

This sequence belongs to the UPF0761 family.

The protein resides in the cell inner membrane. This Pseudomonas paraeruginosa (strain DSM 24068 / PA7) (Pseudomonas aeruginosa (strain PA7)) protein is UPF0761 membrane protein PSPA7_4558.